We begin with the raw amino-acid sequence, 487 residues long: GTPase Der (487 aa).

EngA-type G domains lie at 2-164 (KTIA…SLAK) and 203-374 (IAVG…QRFA). GTP is bound by residues 8–15 (GKPNVGKS), 55–59 (DTGGI), 116–119 (NKVD), 209–216 (GRVNVGKS), 256–260 (DTAGI), and 320–323 (NKWD). Residues 375–459 (YRIPTSALND…PILLSVKGKN (85 aa)) form the KH-like domain. Residues 459 to 480 (NAKDEENTSAKKESPSKVSHRE) are compositionally biased toward basic and acidic residues. The interval 459–487 (NAKDEENTSAKKESPSKVSHRESKNRRFV) is disordered.

This sequence belongs to the TRAFAC class TrmE-Era-EngA-EngB-Septin-like GTPase superfamily. EngA (Der) GTPase family. As to quaternary structure, associates with the 50S ribosomal subunit.

Functionally, GTPase that plays an essential role in the late steps of ribosome biogenesis. The protein is GTPase Der of Helicobacter hepaticus (strain ATCC 51449 / 3B1).